Consider the following 129-residue polypeptide: Prefoldin subunit 6 (129 aa).

2 coiled-coil regions span residues 6-26 (VRDL…IQKD) and 84-118 (IEYI…LQQR).

It belongs to the prefoldin subunit beta family. As to quaternary structure, heterohexamer of two PFD-alpha type and four PFD-beta type subunits forming prefoldin co-chaperone complex. Interacts with PFD2, PFD3, PFD4 and PFD5. Interacts with LSM8, a specific subunit of the LSM2-8 complex, which is a core component of the spliceosome. Binds to HSP90 to facilitate the formation of a larger complex made at least of HSP90, PFD6 and LSM8.

Its subcellular location is the cytoplasm. It is found in the nucleus. Its function is as follows. Binds specifically to cytosolic chaperonin (c-CPN) and transfers target proteins to it. Binds to nascent polypeptide chain and promotes folding in an environment in which there are many competing pathways for nonnative proteins. Together with other chaperonins, contribute to the regulation of gene expression by modulating the spliceosome function on pre-mRNA splicing post-transcriptionally by acting as a co-chaperone of Hsp90 to control levels of LSM8. Required for the biogenesis of tubulins and for subsequent microtubules (MTs) organization and dynamicity, but unable to associate with microtubules. Involved in the process leading to microtubules dissociation in response to gibberellic acid (GA) probably due to the DELLA proteins-mediated translocation of the prefoldin co-chaperone complex from the cytoplasm to the nucleus. Contributes to the GA-dependent regulation of PIN2 trafficking at the plasma membrane, thus influencing auxin flux. This is Prefoldin subunit 6 from Arabidopsis thaliana (Mouse-ear cress).